Reading from the N-terminus, the 729-residue chain is FYN-binding protein 2 (729 aa).

Disordered regions lie at residues 18–130 (KFNA…EEKG), 170–320 (EGQK…SAEL), 371–408 (ELSPRPKEEENTMEEKESWESEPLEPRKELHPSRPPKV), and 469–490 (VTKETPSPSTIRSSSSSEKTYD). Composition is skewed to polar residues over residues 69 to 81 (GVSQPLKNQTLKS), 89 to 99 (KTSSSSGTPEK), 190 to 216 (GAQTLPPQSHSMAQRKSPVTSKASSVS), and 226 to 240 (KSPATEGSHRSSQCQ). The span at 275 to 284 (GPPPPKPSKP) shows a compositional bias: pro residues. The segment covering 374 to 402 (PRPKEEENTMEEKESWESEPLEPRKELHP) has biased composition (basic and acidic residues). Residues 473–485 (TPSPSTIRSSSSS) show a composition bias toward low complexity. Residue Tyr489 is modified to Phosphotyrosine. An SH2-binding; to LCP2 motif is present at residues 520–523 (YEDI). The tract at residues 576–603 (DLGPRSQDDSQDGIIYDDVDTREKESND) is disordered. Acidic residues predominate over residues 584–593 (DSQDGIIYDD). Tyr591 carries the post-translational modification Phosphotyrosine. Residues 594–603 (VDTREKESND) show a composition bias toward basic and acidic residues. The region spanning 668-728 (LVINRAVACA…LVEHLDFKHQ (61 aa)) is the SH3 domain.

In terms of assembly, interacts with SKAP1, LCK and FYN. The phosphorylated form interacts with LCP2. Phosphorylation is required for its function in T-cell activation.

It localises to the membrane raft. Adapter protein that plays a role in T-cell receptor (TCR)-mediated activation of signaling pathways. Required for T-cell activation and integrin-mediated T-cell adhesion in response to TCR stimulation. This is FYN-binding protein 2 from Mus musculus (Mouse).